The following is a 400-amino-acid chain: Golgin-45 (400 aa).

Over residues 1 to 16 (MTTKNLETKVTVTSSP) the composition is skewed to polar residues. A disordered region spans residues 1–58 (MTTKNLETKVTVTSSPIRGAGDGMETEEPPKSVEVTSGVQSRKHHSLQSPWKKAVPSE). The residue at position 15 (Ser15) is a Phosphoserine. The short motif at 18–22 (RGAGD) is the Tankyrase-binding motif element. Ser49 is modified (phosphoserine). Positions 120-213 (NKELSEVKNV…QLERMSIQCD (94 aa)) form a coiled coil. Thr348 is modified (phosphothreonine). Ser353 is modified (phosphoserine). The tract at residues 394–400 (RGELIAL) is essential for interaction with GORASP2.

In terms of assembly, interacts with GORASP2. Interacts with the GTP-bound form of RAB2, but not with other Golgi Rab proteins. Identified in a complex with RAB2 and GORASP2. Post-translationally, ADP-ribosylated by tankyrase TNKS and TNKS2. Poly-ADP-ribosylated protein is recognized by RNF146, followed by ubiquitination. In terms of processing, ubiquitinated by RNF146 when poly-ADP-ribosylated, leading to its degradation. In terms of tissue distribution, detected in adrenal gland.

The protein localises to the golgi apparatus membrane. Its subcellular location is the nucleus. The protein resides in the cytoplasm. Required for normal Golgi structure and for protein transport from the endoplasmic reticulum (ER) through the Golgi apparatus to the cell surface. The polypeptide is Golgin-45 (BLZF1) (Homo sapiens (Human)).